Here is a 178-residue protein sequence, read N- to C-terminus: ATP-dependent protease subunit HslV (178 aa).

Thr7 is a catalytic residue. Residues Gly162, Cys165, and Thr168 each coordinate Na(+).

It belongs to the peptidase T1B family. HslV subfamily. As to quaternary structure, a double ring-shaped homohexamer of HslV is capped on each side by a ring-shaped HslU homohexamer. The assembly of the HslU/HslV complex is dependent on binding of ATP.

It localises to the cytoplasm. It catalyses the reaction ATP-dependent cleavage of peptide bonds with broad specificity.. With respect to regulation, allosterically activated by HslU binding. In terms of biological role, protease subunit of a proteasome-like degradation complex believed to be a general protein degrading machinery. In Cupriavidus necator (strain ATCC 17699 / DSM 428 / KCTC 22496 / NCIMB 10442 / H16 / Stanier 337) (Ralstonia eutropha), this protein is ATP-dependent protease subunit HslV.